The following is a 155-amino-acid chain: GCPLGFHQNRRSCYWFSTIKSSFAEAAGYCRYLESHLAIISNKDEDSFIRGYATRLGEAFNYWLGASDLNIEGRWLWEGQRRMNYTNWSPGQPDNAGGIEHCLELRRDLGNYLWNDYQCQKPSHFICEKERIPYTNSLHANLQQRDSLHANLQQR.

3 disulfides stabilise this stretch: C2–C13, C30–C127, and C102–C119. Residues N9–E128 enclose the C-type lectin domain. N84 carries an N-linked (GlcNAc...) asparagine glycan. Tandem repeats lie at residues N136 to R145 and D146 to R155.

Glycosylated.

Functionally, may promote nucleation and/or growth of calcium carbonate crystals. Binds to D-galactose and D-mannose/D-glucose. This Haliotis laevigata (Smooth Australian abalone) protein is Perlucin.